Consider the following 215-residue polypeptide: Pyridoxine/pyridoxamine 5'-phosphate oxidase (215 aa).

Substrate contacts are provided by residues 9–12 (RRDY) and Lys67. FMN is bound by residues 62 to 67 (RVVLLK), 77 to 78 (FT), Lys84, and Gln106. Residues Tyr124, Arg128, and Ser132 each coordinate substrate. FMN contacts are provided by residues 141 to 142 (QS) and Trp186. Position 192-194 (192-194 (RLH)) interacts with substrate. Position 196 (Arg196) interacts with FMN.

The protein belongs to the pyridoxamine 5'-phosphate oxidase family. As to quaternary structure, homodimer. Requires FMN as cofactor.

It catalyses the reaction pyridoxamine 5'-phosphate + O2 + H2O = pyridoxal 5'-phosphate + H2O2 + NH4(+). It carries out the reaction pyridoxine 5'-phosphate + O2 = pyridoxal 5'-phosphate + H2O2. The protein operates within cofactor metabolism; pyridoxal 5'-phosphate salvage; pyridoxal 5'-phosphate from pyridoxamine 5'-phosphate: step 1/1. It functions in the pathway cofactor metabolism; pyridoxal 5'-phosphate salvage; pyridoxal 5'-phosphate from pyridoxine 5'-phosphate: step 1/1. Its function is as follows. Catalyzes the oxidation of either pyridoxine 5'-phosphate (PNP) or pyridoxamine 5'-phosphate (PMP) into pyridoxal 5'-phosphate (PLP). The polypeptide is Pyridoxine/pyridoxamine 5'-phosphate oxidase (Chromohalobacter salexigens (strain ATCC BAA-138 / DSM 3043 / CIP 106854 / NCIMB 13768 / 1H11)).